The chain runs to 233 residues: MIEHLAINTPYFGILLSLIPFIIATFLFKKTNGFFLFTPLFVSMVVGIAFLKLTGIDYANYKIGGDIINFFLEPATICFAIPLYKRRDVLKKYWKQILGGITLGTTAALVCIYLIAEAFQFSNGIIASMLPQGATTAIALPVSADIGGIKELTSLAVILNGVIIYALGSKLIKLFNITNPIARGLALGTSGHSLGVSSAQEFGETEASMASISLVIVGVIVVIVAPILATLLL.

7 helical membrane passes run 7-27 (INTP…ATFL), 33-53 (GFFL…FLKL), 63-83 (IGGD…AIPL), 97-117 (ILGG…LIAE), 124-144 (GIIA…PVSA), 152-172 (LTSL…SKLI), and 212-232 (ISLV…ATLL).

It belongs to the CidB/LrgB family. LrgB subfamily.

The protein resides in the cell membrane. Functionally, inhibits the expression or activity of extracellular murein hydrolases by interacting, possibly with LrgA, with the holin-like proteins CidA and/or CidB. The LrgAB and CidAB proteins may affect the proton motive force of the membrane. May be involved in programmed cell death (PCD), possibly triggering PCD in response to antibiotics and environmental stresses. This is Antiholin-like protein LrgB from Staphylococcus saprophyticus subsp. saprophyticus (strain ATCC 15305 / DSM 20229 / NCIMB 8711 / NCTC 7292 / S-41).